Here is a 181-residue protein sequence, read N- to C-terminus: Acireductone dioxygenase (181 aa).

Residues histidine 98, histidine 100, glutamate 104, and histidine 142 each contribute to the Fe(2+) site. 4 residues coordinate Ni(2+): histidine 98, histidine 100, glutamate 104, and histidine 142.

Belongs to the acireductone dioxygenase (ARD) family. As to quaternary structure, monomer. Fe(2+) serves as cofactor. It depends on Ni(2+) as a cofactor.

The catalysed reaction is 1,2-dihydroxy-5-(methylsulfanyl)pent-1-en-3-one + O2 = 3-(methylsulfanyl)propanoate + CO + formate + 2 H(+). The enzyme catalyses 1,2-dihydroxy-5-(methylsulfanyl)pent-1-en-3-one + O2 = 4-methylsulfanyl-2-oxobutanoate + formate + 2 H(+). The protein operates within amino-acid biosynthesis; L-methionine biosynthesis via salvage pathway; L-methionine from S-methyl-5-thio-alpha-D-ribose 1-phosphate: step 5/6. In terms of biological role, catalyzes 2 different reactions between oxygen and the acireductone 1,2-dihydroxy-3-keto-5-methylthiopentene (DHK-MTPene) depending upon the metal bound in the active site. Fe-containing acireductone dioxygenase (Fe-ARD) produces formate and 2-keto-4-methylthiobutyrate (KMTB), the alpha-ketoacid precursor of methionine in the methionine recycle pathway. Ni-containing acireductone dioxygenase (Ni-ARD) produces methylthiopropionate, carbon monoxide and formate, and does not lie on the methionine recycle pathway. This chain is Acireductone dioxygenase, found in Synechococcus sp. (strain ATCC 27144 / PCC 6301 / SAUG 1402/1) (Anacystis nidulans).